Consider the following 284-residue polypeptide: RNase adapter protein RapZ (284 aa).

Residue 8 to 15 participates in ATP binding; sequence GRSGSGKS. 56–59 contributes to the GTP binding site; sequence DVRN. The RNA-binding stretch occupies residues 266-284; sequence RSRGKNVQSRHRTLEKRKT.

The protein belongs to the RapZ-like family. RapZ subfamily. Homotrimer.

In terms of biological role, modulates the synthesis of GlmS, by affecting the processing and stability of the regulatory small RNA GlmZ. When glucosamine-6-phosphate (GlcN6P) concentrations are high in the cell, RapZ binds GlmZ and targets it to cleavage by RNase E. Consequently, GlmZ is inactivated and unable to activate GlmS synthesis. Under low GlcN6P concentrations, RapZ is sequestered and inactivated by an other regulatory small RNA, GlmY, preventing GlmZ degradation and leading to synthesis of GlmS. This chain is RNase adapter protein RapZ, found in Salmonella typhimurium (strain LT2 / SGSC1412 / ATCC 700720).